We begin with the raw amino-acid sequence, 138 residues long: Nucleoside diphosphate kinase (138 aa).

Positions 9, 57, 85, 91, 102, and 112 each coordinate ATP. His115 acts as the Pros-phosphohistidine intermediate in catalysis.

This sequence belongs to the NDK family. As to quaternary structure, homotetramer. Requires Mg(2+) as cofactor.

The protein localises to the cytoplasm. It catalyses the reaction a 2'-deoxyribonucleoside 5'-diphosphate + ATP = a 2'-deoxyribonucleoside 5'-triphosphate + ADP. The catalysed reaction is a ribonucleoside 5'-diphosphate + ATP = a ribonucleoside 5'-triphosphate + ADP. Functionally, major role in the synthesis of nucleoside triphosphates other than ATP. The ATP gamma phosphate is transferred to the NDP beta phosphate via a ping-pong mechanism, using a phosphorylated active-site intermediate. The chain is Nucleoside diphosphate kinase from Trichlorobacter lovleyi (strain ATCC BAA-1151 / DSM 17278 / SZ) (Geobacter lovleyi).